The chain runs to 543 residues: MSQPTDEADKSTGNAQVTHESINFANFNQDSTCVSVGYQSGYKIFNVEPFTKCLSLADTSIGIVEMLFSSSLVAIVGLGELPDSSPRKLKVFNTKRRSIICELTFPTSILAVKMNRERMVVLLEDTIYIYDINTMRILHTIETPSNPEGLIALSSSTENNILAYPSPPKLPNRQETSTKGTTNDNDRSHLENIPENVNANSSNLRNGDVIIFNSHTLQPISVIEAHKAQLSAIALSSDGTLLATASNKGTIVRVFDVETGVKLYQFRRGTYPTKIYCLSFSQDNRFVCASSATETVHIFRLGQDEANNTMPSRWSKNQKLALQRYKQSMKQXQGSKPSSLVDSDSDPDVDELVENDNSDDDELEEDIDDELAEERFNSSLTVPRRVSSTTSLGSYGSQESIGDKIEPHVDSARRSVARMIRRTSQSLGRKAAEKMGPYLHPKFSSLLEPNRHFASLKVPASKDTKTVVAIGNSVGQGELLQLGEHEDVDNSSSTSDSTFHQKLLHVMVVSSEGFFYNFGLDTERGGDCTLLSQYSLLTDVNDG.

The disordered stretch occupies residues 163 to 200 (AYPSPPKLPNRQETSTKGTTNDNDRSHLENIPENVNAN). Over residues 173–183 (RQETSTKGTTN) the composition is skewed to polar residues. 2 WD repeats span residues 225–265 (AHKA…KLYQ) and 270–309 (TYPT…ANNT). Residues 266 to 270 (FRRGT) carry the L/FRRG motif motif. Residues 326–336 (KQSMKQXQGSK) are compositionally biased toward polar residues. Residues 326–408 (KQSMKQXQGS…ESIGDKIEPH (83 aa)) are disordered. The span at 343-372 (SDSDPDVDELVENDNSDDDELEEDIDDELA) shows a compositional bias: acidic residues. Polar residues predominate over residues 377–400 (NSSLTVPRRVSSTTSLGSYGSQES).

Belongs to the WD repeat PROPPIN family. As to quaternary structure, component of the PI(3,5)P2 regulatory complex.

It is found in the preautophagosomal structure membrane. The protein localises to the vacuole membrane. It localises to the endosome membrane. The PI(3,5)P2 regulatory complex regulates both the synthesis and turnover of phosphatidylinositol 3,5-bisphosphate (PtdIns(3,5)P2). Necessary for proper vacuole morphology. Plays an important role in osmotically-induced vacuole fragmentation. Involved in correct ATG9 trafficking to the pre-autophagosomal structure. Might also be involved in premeiotic DNA replication. Required for cytoplasm to vacuole transport (Cvt) vesicle formation, autophagy, glucose-induced micropexophagy and ethanol-induced macropexophagy. Required for the involution of the vacuole that occurs during micropexophagy. Involved in the recruitment of ATG2 to punctate structures when cells are grown on glucose. The polypeptide is Autophagy-related protein 18 (ATG18) (Komagataella pastoris (Yeast)).